Here is a 5541-residue protein sequence, read N- to C-terminus: MGDKRPDGIKSAESHGQPSAPFGAENSEVVQRTLEAVIAQATDVIDTASISLRVVQVENTGEVNSTILKVTRNKAAECIPSPARSSSPDQEGDCSSIVTVQRSHECKSFCATPLTRTASTASVASSLSTLRPGSSEKEDDIARDESAKVHADPWHVALAEAHAPLELFTDRPRHSGLSLARAQHTFRIDTPLKQLLASLSVEHKLSFSTTILVGWSIVLSRLTGQEDILVGLGNVDTPIMPVRIDLAGDPNTPQLLARVRDTLLVAGASPDLKDKCNTRLLPLFPGETFPSVQAEFYAHGDQASDKIQNSAPASVDIELHLHDAAQDAFACIRYPTALFNADTIERHAGYLVAVLMNMVINGSQSVATIDIISPAEKTLVLKTWNESSSEYPADRCVQRLFEEQVDKSPDAVAIVHENQSFTYLELDALADRIAHKLVHAGIKQGDFVTTLLPRSVELVAAQLAVLKVGAAYVPIDPKAPLDRQVFIVNDSASRLLITDIHVETATALDLPLLRIDIAELQSKEEYSGVITLTRSSQDAAYVMYTSGSTGRPKGVMVLHQGIVRLVMNNGFAPIGPGDRVAFAANPAFDASTFEVWAPLLNGGCLVVIDSDTSAHPKRLEDALKRYHINTLWLTMTLFNQYVCSIGPALAKLKYLLCGGEQGNQETFAALLKHGGPQNLINGYGPTEATTFATTYNASRMRNKPDRLPIGRPIGSTYVYVLDKHGNLAPLGAVGELHIAGAGVAAGYLNRPDLTAEKFLPNPFSKTQGAYMYKSGDLVRYLPDGNLVFVGRNDDQVKIRGFRIELGEIEARLVEHDLVRESVVLALGEGSEKRLVAYVVAEPTEGLAHTLRSHIEERLPVYMIPAAFVRLGAIPVTANGKIDRRALPEPQEDAFARQAYEVPCGETEDAIAAIWSELLGVNQISRHDSFFALGGHSLLVVKMLDRLHRLGLTVSVRVLFESPTLSVLAQDLSKHQAMIIPPNLITLETSKLTPEMLPLIDLKQDDIDRIISQVPGGIHNIQDVYSLAPLQDGILFHHLLAAEGDPYLLISHLAFRDRVLVDRYLDAFQKVVDRHDILRTAVFWDALSTPAQVVLRSAPLSVTEHVLDPAAGPVADKLSQRYNHSKYRMDLTQAPLLRFALAEDIDGRWIMAQMMHHLIIDHAAIEVMNAEVEAVLEGREDTLSTPPQFRDLVAQVRAGPTQEEHEHFFAEMLGDIEEPTFPFGLTEVHSNGDEVKEAHMTVPQDLNDRLRAQAKRLGVTLAALCHTAWAQVLARTSGQDHVVFGTVLVGGLQGEQSDQSGMGISINTLPFRCDMDDRSVQECVSQIHSRLAALVEHENASLALAQRCSGVPAGSPLFSALMNYRHTLMPTSGCDPSDIEFTAKEERVNYGGIDFLGGQERTNYPFTLSVEDFGQALGLTAQVLQPVDPADVCRYVQQALSSLVLALENAPDMAVSDLDVLPLDERTKLLQLWNATNSPYPDHLCVHALFEQQVKQSPITIAVEHGDQSITYAQLNITASHLAYQLSAQGIGHGDRVATYLPRSFELITAQLAILKIGANYVPIDPKAPLDRQAYIVSDSGSRLVITDEDTDVPVAIGAPLLRLTSFRKLQLSTAMDAGWRAYSGLDSPKTTIERSSLETAYIMYTSGSTGLPKGVMVPHRGIARLVFNNSFTSISSSDRIVFGANPAFDASTFEVWAPLLNGGRVVIIDAEVLTDSRLLAETIETRQVTVLFLTPALFNQYAESIGQSLARLRYIISGGEQGNLEAYSALLRHKGPVQIINAYGPTEATMVATTFTASFDVSGLDVLPIGRPIGNTQVYVLDQHRHPVPMGVVGELYISGPGVANGYLNRLDLTEDRFFPDPFTEIHGSRMYKSGDMVRYLPDGNLVYMGRNDDQIKIRGFRVELGEIEARLVQHSQVRNAVVVPCGEVDDKRLVAYIAADPSEHWARTLHNHLASTLPEYMIPSAFVQLDALPMNNNGKIDRRALPTPDASAFATENYVSPQGRIECALAEIWAEVLKVPRVGRHDNFFLLGGHSLLAVRLMNRISTLGAQLPLSALFASPTLSSFAQAFKGQLSQDDQSHNVIPRVSRSEPLELSFSQQRLWFLAQMEGVSEIYHIPSVLRLRGTLNLEAWQRTLDTLFARHESLRTVFSTVQSQPQIKILPADLGLPLVHHDLRGEQDKHASLKLLSAAEAIMPFDLERGPLIRAQLIQLTDDEHIFLLTQHHIVSDGWSFGILIRELRELYIAYRNGLPNPLRPLAIQYPDYAAWQRCWLNEGRLEAQSAYWKKTLAEAPVSIELPTDRPRPPQQSFTGASVPVRVDAHVTQALKALSQKHGATMFMVVLSAWSAVLSRLSGQDDIVIGSPSANRGHEQVEQLIGFFVNTLALRVDLSGQPNMEQLLKRVRETTVSAQAHQDLPFEQVVEIAQPPRRMDQTPLFQVLFAWQNNDIEMLRLPDLDVTVEELSYDIVKFDLELELYEDKDEICGCLHYSTALFDASTVARHVGYLEAMLRAMATNISQPIETVELLGSTEEELLLQTWNQTEKPFPDDRCIHGLFEDQVERSPDAIAVVHDDRILTYRELNVRADIVAFQLARAGVRPGDSVLTLLSRSINSVVSQIAILKAGAVYVPMDPKAPADRLAYMAADSCARLLVTDECLIVPISIQVPILRLENQPSKNPERHDIVVISRETTANDTAYVMYTSGSTGLPKGVMVSHRAITRLVVNNRLAHITSDDRMALSINPTFDPSTFEVWAPLLHGAQLVILDHDIITDAQCLAEALDHNDITFLVLPMALFHQFAFVIAPALSRLRYIMCGGEQGSIEAFSSILQQGGRVRLINGYGPTEVTTVTTAYVATGSLVSLDRLPIGRPISNTRVYVLDKLRRPVPLGAVGELYIGGPGVATGYLNRPELTAERFLTDPFSKIEGARMYKSGDLVRYLSDGNLIFMGRNDDQVKIRGFRVELGEIEERLLEHALVRETVVVVTGEGNGKRLVAYIVSEPTVQLPVLMREHLGASLPEYMIPTAFVRLETMPLTNNGKVDRRALPEPDSDSFVNKDYEEPQGEVEMKLAAIWSELLKVDKIGRQDNFFMLGGHSLLAVQMIGQLRRIGFVMSVRALFETPVLSVLAASITRGCEVPETPATPVNLITATTAKITPDLLPLIDLSQDDIDRITDQIPGGVANIQDIYSLSPLQDGILFHHMMATEDDPYLLTICTAFRDRDLLERYLDAIQQIVDRHDILRTAIVWRNMTTPAQVVLRKAAISVTELTLDPANSPIIEQLRKLYDARKHRIELDVAPLNRYAVAQDTDGRWIMIQMLHHIVGDHSTLELMDEEIQKIFSGRGETLAAPQPFRNLIAQVRSGLTFQEHEEFFSKMLSDIDAPALPYGLSDVHREGANVTETQLMLPQKLNDRLRSQARRLGVSLASLCHLAWAQVIAATSGQYHVVFGTVLFGRMQGGSGADRAMGLFINTLPLRVDVEKGSILESVHKVQTDLATLLEHEHASLALAQRCSSIPSGSPLFSALLNYRHNDDTFTQSELDSGIEIIDGHERTNYPFVLSVEDCGTSFGVTVQVVEPYASASVCGYMQQVLQSLADALEHTPDAPIQGLKVIPAEEHDLLIHSWNRTDSPFPAHECVHHVFENQVRERPEAIALVHGDQTLTYCELNTRANNLARQLLDAGVKPGDLVPTLLSRSIDLVTAQLAIVKAGAAYVPIDVKAPADRQAYIVSDSGARLLVTGEHTVVHDSIQAQLFRLGAIDAKNLHQQDASVSIGAIGTSCDTAYVMYTSGSTGMPKGVMIPHRGITRLVINNGHANYGPDDCVVFGANPAFDASTIEVWAPLLNGGRLVIVDADVYTDAQRLAGLLERYAVTVLFLTPVLLNHYVPIIGQSLSKLRYLLSGGEQGSLHAYSTLLHLGGRVRLINAYGPTESTTIATTYEATISNIDALECLPIGRPMANTQVYVLDKHFQPVPTGAVGELYIGGAGLANGYLNRPDLTAELFLPNVFSKDGGARMYRTGDLVKYLPDGNLVFMGRNDEQVKIRGFRIELGEIETRLVEHELVTEAVVVALGNEGDKRLVAYVVAESAKQLASTLREHISTSLPEYMVPAAFVRLDALPFTANGKLDRRHLPAPDASAFVAQDYEAPRGDIEISLAEMWTDLLKIDQVGRHDNFFTLGGHSLLAVQMIEQLRRIGLSLSVRALFDTPVLSVLAASLNTHQAAPETPANLITAATTVITPDLLPLIDLTQGDIDCIVDQVPGGVANVQDVYSLSPLQDGILFHHMMATEGDPYLLIAGYSFRDRELLDRYLDAVQQIVDRHDILRTAIVSENLTVPAQVVLRKAPLSITELKLDPSDGAITSQLMQLYDARKYRIELRSAPLTRFIIAQDADGRWIMVQLLHHIIGDHSTLEIMDEEIKTILGGKANTLPAPQPFRNLVAQVRLGLTVQEHEEFFSKMLSDIDTPALPYGLSDVHREGAGVTETHLMLPPNLNDRLRRHAKRLGVSPASLCHLAWAQVIAATSGQRHVVFGTVLFGRMQGGSGADRTMGLFINTLPLRVDIENNTVLESVRKVQTDLATLLEHEHASLALAQRCSSIPSGSPLFSALLNYRHNATPFTQVETYDGVEAIEGHERTNYPFVLSVEDFGTSFGVTVQVVEPYASASVCGYMQQVLQSLADALEHTPDAPIQGLKVIPAEEHDLLIHSWNQTESSFPAHQCVHHVFENQVRERPEAIALVHGDQTLTYRELNARVNNLARQLMDAGVKPGDLVPTLLSRSIDLVIVQLAIVKAGAAYVPIDVKAPADRQAYIVSDSGARLLVTGEHTVVHNSIQVQLFRLRAIDAKNLHQQDVSVSIGAIGSSCDTAYVMYTSGSTGMPKGVMIPHRGITRLVINNGHANYGSDDCVVFGANPAFDASTIEVWAPLLNGGRLVIVDADVYTDAQRLAGVLERYAVTVLFLTPVLLNHYVPIIGQSLSKLRYLLSGGEQGSLHAYSTLLHLGGRVRLINAYGPTESTTIATTYEATISNIDALECLPIGRPMANTQVYVLDKHFQPVPTGAVGELYIGGAGLANGYLNRPDLTAELFLPNVFSKDGGARMYRTGDLVKYLPDGNLVFMGRNDEQVKIRGFRIELGEIEARLVEHELVTEAVVLALGSGSEKRLVAYVVAEHNEELLHILREHLAASVPEYMIPAAFVRLDQLPVTNNGKVDRRALPDPEATAFASTSYELPSGDVEIGLAEIWAELLSLDRVGRHDNFFMLGGHSLLAVRMAGSVRSRLGLDLKLHSLFAAPTVAELAQKLVQGGANEDDEYSVIFPLKTSGNRPPLFCIHSGLGLSWPYIGLVKHLHPEQPVYGVQARGLDGRTKLATSVEEMTLDYMEQIRRIQPHGPYHLLGWSFGGTVAHSMATELEKRGEQVPLLAIMDSTADYSIVAHLKVDEIDGGANFEHLVRFGGDVSGEDGWALWERTKPINDNSFVLAMQFKPSVYNGNILFFRATQKENDLTPMVNPFSWRPYTNGAIEVHNVECTHIEMDKPESMAIIGRTVTSKLQRS.

The segment covering 1–13 (MGDKRPDGIKSAE) has biased composition (basic and acidic residues). The segment at 1–26 (MGDKRPDGIKSAESHGQPSAPFGAEN) is disordered. The tract at residues 137-378 (KEDDIARDES…IDIISPAEKT (242 aa)) is condensation 1. The segment at 401 to 799 (FEEQVDKSPD…GRNDDQVKIR (399 aa)) is adenylation 1. Residues 901–975 (VPCGETEDAI…VLAQDLSKHQ (75 aa)) enclose the Carrier 1 domain. Ser936 carries the post-translational modification O-(pantetheine 4'-phosphoryl)serine. The tract at residues 1021 to 1469 (QDVYSLAPLQ…LPLDERTKLL (449 aa)) is dual epimerase/condensation (E/C) domain 1. The segment at 1489–1899 (FEQQVKQSPI…GRNDDQIKIR (411 aa)) is adenylation 2. Positions 2001 to 2075 (SPQGRIECAL…SFAQAFKGQL (75 aa)) constitute a Carrier 2 domain. An O-(pantetheine 4'-phosphoryl)serine modification is found at Ser2036. The condensation 2 stretch occupies residues 2095–2537 (ELSFSQQRLW…LGSTEEELLL (443 aa)). The adenylation 3 stretch occupies residues 2557–2956 (FEDQVERSPD…GRNDDQVKIR (400 aa)). The Carrier 3 domain occupies 3058 to 3132 (EPQGEVEMKL…VLAASITRGC (75 aa)). Ser3093 is subject to O-(pantetheine 4'-phosphoryl)serine. The tract at residues 3182–3616 (QDIYSLSPLQ…VIPAEEHDLL (435 aa)) is dual epimerase/condensation (E/C) domain 2. The tract at residues 3637–4038 (FENQVRERPE…GRNDEQVKIR (402 aa)) is adenylation 4. The Carrier 4 domain maps to 4140 to 4214 (APRGDIEISL…VLAASLNTHQ (75 aa)). Position 4175 is an O-(pantetheine 4'-phosphoryl)serine (Ser4175). The dual epimerase/condensation (E/C) domain 3 stretch occupies residues 4260 to 4695 (VQDVYSLSPL…VIPAEEHDLL (436 aa)). Residues 4716 to 5117 (FENQVRERPE…GRNDEQVKIR (402 aa)) form an adenylation 5 region. The region spanning 5219–5294 (LPSGDVEIGL…ELAQKLVQGG (76 aa)) is the Carrier 5 domain. O-(pantetheine 4'-phosphoryl)serine is present on Ser5254. The thioesterase (TE) domain stretch occupies residues 5315–5523 (PLFCIHSGLG…VECTHIEMDK (209 aa)).

This sequence belongs to the NRP synthetase family.

Functionally, nonribosomal peptide synthetase that catalyzes the biosynthesis of the hydrophobic cyclopentapeptides malpibaldins, natural products that show biosurfactant activities. Module 3 shows promiscuous adenylation (accepting either Trp, Phe or Tyr) leading to the parallel production of multiple products from one NRPS assembly line, including malpibaldin A corresponding to cyclo(-L-Leu-D-Leu-D-Phe-L-Leu-D-Val-), malpibaldin B corresponding to cyclo(-L-Leu-D-Leu-D-Tyr-L-Leu-D-Val-) and malpibaldin C corresponding to cyclo(-Leu-Leu-Trp-Leu-Val-). In Mortierella alpina (Oleaginous fungus), this protein is Malpibaldin synthetase.